The sequence spans 466 residues: Argininosuccinate lyase (466 aa).

Belongs to the lyase 1 family. Argininosuccinate lyase subfamily.

The protein localises to the cytoplasm. It carries out the reaction 2-(N(omega)-L-arginino)succinate = fumarate + L-arginine. Its pathway is amino-acid biosynthesis; L-arginine biosynthesis; L-arginine from L-ornithine and carbamoyl phosphate: step 3/3. This chain is Argininosuccinate lyase, found in Desulfovibrio desulfuricans (strain ATCC 27774 / DSM 6949 / MB).